The sequence spans 213 residues: Large ribosomal subunit protein uL3 (213 aa).

The residue at position 151 (glutamine 151) is an N5-methylglutamine.

Belongs to the universal ribosomal protein uL3 family. Part of the 50S ribosomal subunit. Forms a cluster with proteins L14 and L19. Methylated by PrmB.

Its function is as follows. One of the primary rRNA binding proteins, it binds directly near the 3'-end of the 23S rRNA, where it nucleates assembly of the 50S subunit. The sequence is that of Large ribosomal subunit protein uL3 from Rhizobium johnstonii (strain DSM 114642 / LMG 32736 / 3841) (Rhizobium leguminosarum bv. viciae).